A 457-amino-acid polypeptide reads, in one-letter code: MEEQARPPGRPAASATLQGSAHPGGAASTATAAALSFSSVATVTLGNQSDAGRPEAAGSRGPAPLLWHGAAVAAQALVLLLIFLLSSLGNCAVMGVIVKHRQLRTVTNAFILSLSLSDLLTALLCLPAAFLDLFAPPGDSGPWRSFCAASRFFSSCFGIVSTFSVALISLDRYCAIVRPPRDKLGRRRALQLLAGAWLAALGFSLPWDLLRAPREPPAPQSFHRCLYRTSPDPAQLGVAYSVGLVVACYLLPFLLMCFCRYHICKTVRLSDVRVRPMTTYARVLRFFSEVRTATTVLIMIIFVMCCWGPYCFLVLLAATRQGQATQAPSLLNVAAVWLTWANGAINPVIYAIRNPNISMLLGRNREEGYRTRNMDAFLPSQGLGFQARSRNRLRNGCANRLGACSRMPSSNPASGSGGEVVMWARKNPVVLFFREGPPDSVMEVGKLHNSETRDSSI.

Residues Met-1–Ala-26 are disordered. Residues Met-1–Pro-64 are Extracellular-facing. The N-linked (GlcNAc...) asparagine glycan is linked to Asn-47. A helical transmembrane segment spans residues Leu-65–Leu-85. Over Ser-86–Ala-109 the chain is Cytoplasmic. The chain crosses the membrane as a helical span at residues Phe-110–Phe-130. The Extracellular portion of the chain corresponds to Leu-131–Cys-156. Residues Phe-157–Val-177 form a helical membrane-spanning segment. The Cytoplasmic segment spans residues Arg-178–Ala-189. Residues Leu-190–Leu-210 form a helical membrane-spanning segment. Residues Arg-211–Gln-235 lie on the Extracellular side of the membrane. Residues Leu-236 to Met-256 form a helical membrane-spanning segment. Over Cys-257 to Thr-295 the chain is Cytoplasmic. The helical transmembrane segment at Val-296–Leu-316 threads the bilayer. The Extracellular segment spans residues Ala-317–Ser-329. Residues Leu-330–Tyr-350 traverse the membrane as a helical segment. Over Ala-351–Ile-457 the chain is Cytoplasmic.

This sequence belongs to the G-protein coupled receptor 1 family. In terms of assembly, interacts with MTNR1B. Interacts with ARRB1 and ARRB2 in a spontaneous and agonist-independent manner; leading to the internalization of GPR135 in the endosomal compartment.

The protein localises to the cell membrane. Its subcellular location is the endosome membrane. In terms of biological role, orphan receptor. Has spontaneous activity for beta-arrestin recruitment. Shows a reciprocal regulatory interaction with the melatonin receptor MTNR1B most likely through receptor heteromerization. This Mus musculus (Mouse) protein is G-protein coupled receptor 135 (Gpr135).